We begin with the raw amino-acid sequence, 159 residues long: Succinate dehydrogenase [ubiquinone] cytochrome b small subunit, mitochondrial (159 aa).

The transit peptide at 1–56 (MAVLLKLGVLCSGQGARALLLRSRVVRPAYVSAFLQDQPTQGRCGTQHIHLSPSHH) directs the protein to the mitochondrion. The Mitochondrial matrix segment spans residues 57–63 (SGSKAAS). The helical transmembrane segment at 64 to 85 (LHWTSERVVSVLLLGLIPAGYL) threads the bilayer. Topologically, residues 86–90 (NPCSV) are mitochondrial intermembrane. Residues 91–111 (VDYSLAAALTLHSHWGLGQVV) traverse the membrane as a helical segment. Histidine 102 contributes to the heme b binding site. Residues 112–120 (TDYVHGDTL) are Mitochondrial matrix-facing. Tyrosine 114 contacts a ubiquinone. The helical transmembrane segment at 121–142 (PKAARAGLLALSALTFAGLCYF) threads the bilayer. Over 143 to 159 (NYHDVGICRAVAMLWKL) the chain is Mitochondrial intermembrane.

This sequence belongs to the CybS family. In terms of assembly, component of complex II composed of four subunits: the flavoprotein (FP) SDHA, iron-sulfur protein (IP) SDHB, and a cytochrome b560 composed of SDHC and SDHD.

Its subcellular location is the mitochondrion inner membrane. It functions in the pathway carbohydrate metabolism; tricarboxylic acid cycle. Functionally, membrane-anchoring subunit of succinate dehydrogenase (SDH) that is involved in complex II of the mitochondrial electron transport chain and is responsible for transferring electrons from succinate to ubiquinone (coenzyme Q). SDH also oxidizes malate to the non-canonical enol form of oxaloacetate, enol-oxaloacetate. Enol-oxaloacetate, which is a potent inhibitor of the succinate dehydrogenase activity, is further isomerized into keto-oxaloacetate. This chain is Succinate dehydrogenase [ubiquinone] cytochrome b small subunit, mitochondrial (Sdhd), found in Mus musculus (Mouse).